The sequence spans 242 residues: Transcription factor Spi-C (242 aa).

Residues 112–195 constitute a DNA-binding region (ETS); sequence LRLFEYLFES…IRRKLTYQFS (84 aa).

This sequence belongs to the ETS family. Binds DNA as a monomer. Expressed in lymphoid tissues, including spleen, bone marrow and thymus. According to PubMed:19037245, highly expressed in red pulp macrophages and, at lower, levels in B-cells, but not in other cells, including, monocytes, dendritic cells and other tissue macrophages. According to PubMed:10464163 expressed in pre- and mature B-cells but not in immature B-cells; according to PubMed:10187812 not expressed in pre- but predominantly in mature B-cells and at lower levels in macrophages.

Its subcellular location is the nucleus. Functionally, controls the development of red pulp macrophages required for red blood cells recycling and iron homeostasis. Transcription factor that binds to the PU-box, a purine-rich DNA sequence (5'-GAGGA[AT]-3') that can act as a lymphoid-specific enhancer. Regulates VCAM1 gene expression. The protein is Transcription factor Spi-C (Spic) of Mus musculus (Mouse).